A 382-amino-acid polypeptide reads, in one-letter code: Methylthioribose-1-phosphate isomerase (382 aa).

Aspartate 258 serves as the catalytic Proton donor.

Belongs to the eIF-2B alpha/beta/delta subunits family. MtnA subfamily.

The protein resides in the cytoplasm. The protein localises to the nucleus. The catalysed reaction is 5-(methylsulfanyl)-alpha-D-ribose 1-phosphate = 5-(methylsulfanyl)-D-ribulose 1-phosphate. Its pathway is amino-acid biosynthesis; L-methionine biosynthesis via salvage pathway; L-methionine from S-methyl-5-thio-alpha-D-ribose 1-phosphate: step 1/6. Its function is as follows. Catalyzes the interconversion of methylthioribose-1-phosphate (MTR-1-P) into methylthioribulose-1-phosphate (MTRu-1-P). In Laccaria bicolor (strain S238N-H82 / ATCC MYA-4686) (Bicoloured deceiver), this protein is Methylthioribose-1-phosphate isomerase.